A 269-amino-acid polypeptide reads, in one-letter code: 4-hydroxy-tetrahydrodipicolinate reductase (269 aa).

Residue Gly-11 to Met-16 coordinates NAD(+). Lys-39 lines the NADP(+) pocket. NAD(+) is bound by residues Gly-101 to Thr-103 and Ala-125 to Phe-128. His-158 functions as the Proton donor/acceptor in the catalytic mechanism. His-159 lines the (S)-2,3,4,5-tetrahydrodipicolinate pocket. Lys-162 serves as the catalytic Proton donor. A (S)-2,3,4,5-tetrahydrodipicolinate-binding site is contributed by Gly-168–Thr-169.

The protein belongs to the DapB family. As to quaternary structure, homotetramer.

It is found in the cytoplasm. The enzyme catalyses (S)-2,3,4,5-tetrahydrodipicolinate + NAD(+) + H2O = (2S,4S)-4-hydroxy-2,3,4,5-tetrahydrodipicolinate + NADH + H(+). It catalyses the reaction (S)-2,3,4,5-tetrahydrodipicolinate + NADP(+) + H2O = (2S,4S)-4-hydroxy-2,3,4,5-tetrahydrodipicolinate + NADPH + H(+). Its pathway is amino-acid biosynthesis; L-lysine biosynthesis via DAP pathway; (S)-tetrahydrodipicolinate from L-aspartate: step 4/4. In terms of biological role, catalyzes the conversion of 4-hydroxy-tetrahydrodipicolinate (HTPA) to tetrahydrodipicolinate. The polypeptide is 4-hydroxy-tetrahydrodipicolinate reductase (Buchnera aphidicola subsp. Acyrthosiphon pisum (strain Tuc7)).